Here is a 493-residue protein sequence, read N- to C-terminus: Probable mannosyl-oligosaccharide alpha-1,2-mannosidase 1B (493 aa).

An N-terminal signal peptide occupies residues 1-18 (MHLPSLSVALALVSSSLA). Residues Asn-87 and Asn-174 are each glycosylated (N-linked (GlcNAc...) asparagine). Residues Cys-324 and Cys-353 are joined by a disulfide bond. Glu-367 (proton donor) is an active-site residue. N-linked (GlcNAc...) asparagine glycosylation occurs at Asn-489.

Belongs to the glycosyl hydrolase 47 family. In terms of assembly, monomer. Ca(2+) serves as cofactor. Requires Mg(2+) as cofactor.

The protein resides in the cytoplasmic vesicle lumen. The enzyme catalyses N(4)-(alpha-D-Man-(1-&gt;2)-alpha-D-Man-(1-&gt;2)-alpha-D-Man-(1-&gt;3)-[alpha-D-Man-(1-&gt;2)-alpha-D-Man-(1-&gt;3)-[alpha-D-Man-(1-&gt;2)-alpha-D-Man-(1-&gt;6)]-alpha-D-Man-(1-&gt;6)]-beta-D-Man-(1-&gt;4)-beta-D-GlcNAc-(1-&gt;4)-beta-D-GlcNAc)-L-asparaginyl-[protein] (N-glucan mannose isomer 9A1,2,3B1,2,3) + 4 H2O = N(4)-(alpha-D-Man-(1-&gt;3)-[alpha-D-Man-(1-&gt;3)-[alpha-D-Man-(1-&gt;6)]-alpha-D-Man-(1-&gt;6)]-beta-D-Man-(1-&gt;4)-beta-D-GlcNAc-(1-&gt;4)-beta-D-GlcNAc)-L-asparaginyl-[protein] (N-glucan mannose isomer 5A1,2) + 4 beta-D-mannose. The catalysed reaction is N(4)-(alpha-D-Man-(1-&gt;2)-alpha-D-Man-(1-&gt;2)-alpha-D-Man-(1-&gt;3)-[alpha-D-Man-(1-&gt;3)-[alpha-D-Man-(1-&gt;2)-alpha-D-Man-(1-&gt;6)]-alpha-D-Man-(1-&gt;6)]-beta-D-Man-(1-&gt;4)-beta-D-GlcNAc-(1-&gt;4)-beta-D-GlcNAc)-L-asparaginyl-[protein] (N-glucan mannose isomer 8A1,2,3B1,3) + 3 H2O = N(4)-(alpha-D-Man-(1-&gt;3)-[alpha-D-Man-(1-&gt;3)-[alpha-D-Man-(1-&gt;6)]-alpha-D-Man-(1-&gt;6)]-beta-D-Man-(1-&gt;4)-beta-D-GlcNAc-(1-&gt;4)-beta-D-GlcNAc)-L-asparaginyl-[protein] (N-glucan mannose isomer 5A1,2) + 3 beta-D-mannose. The protein operates within protein modification; protein glycosylation. Functionally, involved in the maturation of Asn-linked oligosaccharides. Progressively trims alpha-1,2-linked mannose residues from Man(9)GlcNAc(2) to produce Man(5)GlcNAc(2). The protein is Probable mannosyl-oligosaccharide alpha-1,2-mannosidase 1B (mns1B) of Aspergillus fumigatus (strain CBS 144.89 / FGSC A1163 / CEA10) (Neosartorya fumigata).